Consider the following 469-residue polypeptide: 3-isopropylmalate dehydratase large subunit (469 aa).

[4Fe-4S] cluster is bound by residues cysteine 350, cysteine 410, and cysteine 413.

This sequence belongs to the aconitase/IPM isomerase family. LeuC type 1 subfamily. In terms of assembly, heterodimer of LeuC and LeuD. [4Fe-4S] cluster serves as cofactor.

The enzyme catalyses (2R,3S)-3-isopropylmalate = (2S)-2-isopropylmalate. It functions in the pathway amino-acid biosynthesis; L-leucine biosynthesis; L-leucine from 3-methyl-2-oxobutanoate: step 2/4. Functionally, catalyzes the isomerization between 2-isopropylmalate and 3-isopropylmalate, via the formation of 2-isopropylmaleate. The polypeptide is 3-isopropylmalate dehydratase large subunit (Sinorhizobium medicae (strain WSM419) (Ensifer medicae)).